We begin with the raw amino-acid sequence, 445 residues long: UPF0210 protein SUB1511 (445 aa).

Belongs to the UPF0210 family. As to quaternary structure, homodimer.

The protein is UPF0210 protein SUB1511 of Streptococcus uberis (strain ATCC BAA-854 / 0140J).